Reading from the N-terminus, the 98-residue chain is NADH-ubiquinone oxidoreductase chain 4L (98 aa).

3 helical membrane passes run 2 to 22, 29 to 49, and 61 to 81; these read PSIS…MLIF, SLLC…LTIL, and ILLL…LVTV.

Belongs to the complex I subunit 4L family. Core subunit of respiratory chain NADH dehydrogenase (Complex I) which is composed of 45 different subunits.

The protein resides in the mitochondrion inner membrane. The enzyme catalyses a ubiquinone + NADH + 5 H(+)(in) = a ubiquinol + NAD(+) + 4 H(+)(out). Functionally, core subunit of the mitochondrial membrane respiratory chain NADH dehydrogenase (Complex I) which catalyzes electron transfer from NADH through the respiratory chain, using ubiquinone as an electron acceptor. Part of the enzyme membrane arm which is embedded in the lipid bilayer and involved in proton translocation. The sequence is that of NADH-ubiquinone oxidoreductase chain 4L (MT-ND4L) from Eulemur mongoz (Mongoose lemur).